The primary structure comprises 111 residues: 2Fe-2S ferredoxin (111 aa).

One can recognise a 2Fe-2S ferredoxin-type domain in the interval 1–104 (MPKIFFLPHK…DIEVQIPLYN (104 aa)). Positions 42, 48, 51, and 87 each coordinate [2Fe-2S] cluster.

The protein belongs to the adrenodoxin/putidaredoxin family. It depends on [2Fe-2S] cluster as a cofactor.

Ferredoxin are iron-sulfur proteins that transfer electrons in a wide variety of metabolic reactions. In Buchnera aphidicola subsp. Schizaphis graminum (strain Sg), this protein is 2Fe-2S ferredoxin (fdx).